The chain runs to 530 residues: Bifunctional purine biosynthesis protein PurH (530 aa).

One can recognise an MGS-like domain in the interval 1–148; it reads MEQARPIRRA…KNHKDVAIVV (148 aa).

This sequence belongs to the PurH family.

It carries out the reaction (6R)-10-formyltetrahydrofolate + 5-amino-1-(5-phospho-beta-D-ribosyl)imidazole-4-carboxamide = 5-formamido-1-(5-phospho-D-ribosyl)imidazole-4-carboxamide + (6S)-5,6,7,8-tetrahydrofolate. The catalysed reaction is IMP + H2O = 5-formamido-1-(5-phospho-D-ribosyl)imidazole-4-carboxamide. It participates in purine metabolism; IMP biosynthesis via de novo pathway; 5-formamido-1-(5-phospho-D-ribosyl)imidazole-4-carboxamide from 5-amino-1-(5-phospho-D-ribosyl)imidazole-4-carboxamide (10-formyl THF route): step 1/1. Its pathway is purine metabolism; IMP biosynthesis via de novo pathway; IMP from 5-formamido-1-(5-phospho-D-ribosyl)imidazole-4-carboxamide: step 1/1. This Aeromonas salmonicida (strain A449) protein is Bifunctional purine biosynthesis protein PurH.